Here is a 346-residue protein sequence, read N- to C-terminus: Histidinol-phosphate aminotransferase (346 aa).

K209 carries the N6-(pyridoxal phosphate)lysine modification.

This sequence belongs to the class-II pyridoxal-phosphate-dependent aminotransferase family. Histidinol-phosphate aminotransferase subfamily. In terms of assembly, homodimer. The cofactor is pyridoxal 5'-phosphate.

It carries out the reaction L-histidinol phosphate + 2-oxoglutarate = 3-(imidazol-4-yl)-2-oxopropyl phosphate + L-glutamate. It participates in amino-acid biosynthesis; L-histidine biosynthesis; L-histidine from 5-phospho-alpha-D-ribose 1-diphosphate: step 7/9. This Flavobacterium psychrophilum (strain ATCC 49511 / DSM 21280 / CIP 103535 / JIP02/86) protein is Histidinol-phosphate aminotransferase.